A 318-amino-acid chain; its full sequence is Protease HtpX homolog (318 aa).

2 helical membrane passes run threonine 6 to glycine 26 and alanine 28 to serine 48. Histidine 130 lines the Zn(2+) pocket. Glutamate 131 is an active-site residue. Residue histidine 134 participates in Zn(2+) binding. The next 2 membrane-spanning stretches (helical) occupy residues isoleucine 145 to glycine 165 and proline 173 to valine 193. A Zn(2+)-binding site is contributed by glutamate 202. Residues asparagine 284–serine 318 are disordered.

This sequence belongs to the peptidase M48B family. Zn(2+) serves as cofactor.

It localises to the cell inner membrane. In Rhizobium etli (strain CIAT 652), this protein is Protease HtpX homolog.